Reading from the N-terminus, the 241-residue chain is ATP synthase subunit a (241 aa).

Helical transmembrane passes span 30-50 (GQVFMTSWLLIGALLALVVIG), 91-111 (FIGTLFLFIFVSNWGGALVPW), 128-148 (INTTVALALLVSLSYFYAGLS), 193-213 (LVVAVLVFLVPLVLPVPVMFL), and 214-234 (GLFTSAIQALIFATLAAYYIG).

It belongs to the ATPase A chain family. F-type ATPases have 2 components, CF(1) - the catalytic core - and CF(0) - the membrane proton channel. CF(1) has five subunits: alpha(3), beta(3), gamma(1), delta(1), epsilon(1). CF(0) has four main subunits: a, b, b' and c.

The protein resides in the cellular thylakoid membrane. In terms of biological role, key component of the proton channel; it plays a direct role in the translocation of protons across the membrane. In Prochlorococcus marinus (strain NATL1A), this protein is ATP synthase subunit a.